The sequence spans 571 residues: Proline--tRNA ligase (571 aa).

Belongs to the class-II aminoacyl-tRNA synthetase family. ProS type 1 subfamily. Homodimer.

The protein resides in the cytoplasm. It catalyses the reaction tRNA(Pro) + L-proline + ATP = L-prolyl-tRNA(Pro) + AMP + diphosphate. Its function is as follows. Catalyzes the attachment of proline to tRNA(Pro) in a two-step reaction: proline is first activated by ATP to form Pro-AMP and then transferred to the acceptor end of tRNA(Pro). As ProRS can inadvertently accommodate and process non-cognate amino acids such as alanine and cysteine, to avoid such errors it has two additional distinct editing activities against alanine. One activity is designated as 'pretransfer' editing and involves the tRNA(Pro)-independent hydrolysis of activated Ala-AMP. The other activity is designated 'posttransfer' editing and involves deacylation of mischarged Ala-tRNA(Pro). The misacylated Cys-tRNA(Pro) is not edited by ProRS. The chain is Proline--tRNA ligase from Histophilus somni (strain 129Pt) (Haemophilus somnus).